A 452-amino-acid polypeptide reads, in one-letter code: Mitochondrial distribution and morphology protein 10 (452 aa).

It belongs to the MDM10 family. In terms of assembly, component of the ER-mitochondria encounter structure (ERMES) or MDM complex, composed of MMM1, MDM10, MDM12 and MDM34. Associates with the mitochondrial outer membrane sorting assembly machinery SAM(core) complex.

Its subcellular location is the mitochondrion outer membrane. Component of the ERMES/MDM complex, which serves as a molecular tether to connect the endoplasmic reticulum and mitochondria. Components of this complex are involved in the control of mitochondrial shape and protein biogenesis and may function in phospholipid exchange. MDM10 is involved in the late assembly steps of the general translocase of the mitochondrial outer membrane (TOM complex). Functions in the TOM40-specific route of the assembly of outer membrane beta-barrel proteins, including the association of TOM40 with the receptor TOM22 and small TOM proteins. Can associate with the SAM(core) complex as well as the MDM12-MMM1 complex, both involved in late steps of the major beta-barrel assembly pathway, that is responsible for biogenesis of all outer membrane beta-barrel proteins. May act as a switch that shuttles between both complexes and channels precursor proteins into the TOM40-specific pathway. Plays a role in mitochondrial morphology and in the inheritance of mitochondria. The polypeptide is Mitochondrial distribution and morphology protein 10 (Kluyveromyces lactis (strain ATCC 8585 / CBS 2359 / DSM 70799 / NBRC 1267 / NRRL Y-1140 / WM37) (Yeast)).